Consider the following 395-residue polypeptide: tRNA-specific 2-thiouridylase MnmA (395 aa).

Residues 7-14 (GLSGGVDS) and methionine 33 each bind ATP. The tract at residues 95–97 (NPD) is interaction with target base in tRNA. Cysteine 100 acts as the Nucleophile in catalysis. Cysteines 100 and 200 form a disulfide. Residue glycine 124 participates in ATP binding. The interval 150–152 (KDQ) is interaction with tRNA. Cysteine 200 serves as the catalytic Cysteine persulfide intermediate. The segment at 346–347 (RY) is interaction with tRNA.

Belongs to the MnmA/TRMU family.

The protein resides in the cytoplasm. It catalyses the reaction S-sulfanyl-L-cysteinyl-[protein] + uridine(34) in tRNA + AH2 + ATP = 2-thiouridine(34) in tRNA + L-cysteinyl-[protein] + A + AMP + diphosphate + H(+). Functionally, catalyzes the 2-thiolation of uridine at the wobble position (U34) of tRNA, leading to the formation of s(2)U34. In Christiangramia forsetii (strain DSM 17595 / CGMCC 1.15422 / KT0803) (Gramella forsetii), this protein is tRNA-specific 2-thiouridylase MnmA.